Reading from the N-terminus, the 154-residue chain is MADSGGIKVLSENRQARFQYEILETFETGIELLGTEVKSIRAGKVNLRDGFALVRNGEVWLHNIHISPHQQASAYYNHDPLRTRKLLMHREEIRKLIGKVEQKGLTLVPLKMYLKQGWVKVTLGLGRGKKLHDKRETERRRQDQRDIQRAIKRA.

Residues 130–154 form a disordered region; the sequence is KLHDKRETERRRQDQRDIQRAIKRA. Basic and acidic residues predominate over residues 133-154; that stretch reads DKRETERRRQDQRDIQRAIKRA.

Belongs to the SmpB family.

It localises to the cytoplasm. In terms of biological role, required for rescue of stalled ribosomes mediated by trans-translation. Binds to transfer-messenger RNA (tmRNA), required for stable association of tmRNA with ribosomes. tmRNA and SmpB together mimic tRNA shape, replacing the anticodon stem-loop with SmpB. tmRNA is encoded by the ssrA gene; the 2 termini fold to resemble tRNA(Ala) and it encodes a 'tag peptide', a short internal open reading frame. During trans-translation Ala-aminoacylated tmRNA acts like a tRNA, entering the A-site of stalled ribosomes, displacing the stalled mRNA. The ribosome then switches to translate the ORF on the tmRNA; the nascent peptide is terminated with the 'tag peptide' encoded by the tmRNA and targeted for degradation. The ribosome is freed to recommence translation, which seems to be the essential function of trans-translation. This chain is SsrA-binding protein, found in Synechococcus elongatus (strain ATCC 33912 / PCC 7942 / FACHB-805) (Anacystis nidulans R2).